A 383-amino-acid polypeptide reads, in one-letter code: 8-amino-7-oxononanoate synthase (383 aa).

Arginine 22 is a binding site for substrate. A pyridoxal 5'-phosphate-binding site is contributed by 109–110 (GF). Histidine 134 provides a ligand contact to substrate. Residues serine 178, histidine 206, and threonine 232 each coordinate pyridoxal 5'-phosphate. Lysine 235 carries the post-translational modification N6-(pyridoxal phosphate)lysine. Residue threonine 348 coordinates substrate.

The protein belongs to the class-II pyridoxal-phosphate-dependent aminotransferase family. BioF subfamily. Homodimer. The cofactor is pyridoxal 5'-phosphate.

The enzyme catalyses 6-carboxyhexanoyl-[ACP] + L-alanine + H(+) = (8S)-8-amino-7-oxononanoate + holo-[ACP] + CO2. Its pathway is cofactor biosynthesis; biotin biosynthesis. In terms of biological role, catalyzes the decarboxylative condensation of pimeloyl-[acyl-carrier protein] and L-alanine to produce 8-amino-7-oxononanoate (AON), [acyl-carrier protein], and carbon dioxide. The sequence is that of 8-amino-7-oxononanoate synthase from Vibrio campbellii (strain ATCC BAA-1116).